The chain runs to 780 residues: Gelsolin (780 aa).

Residue Met1 is modified to N-acetylmethionine; alternate. A signal peptide spans 1–25 (MAPYRSSLLCALLLLALCALSPSHA). Residues 51–174 (VVEHPEFLKA…YKKGGVASGF (124 aa)) are actin-severing. The Gelsolin-like 1 repeat unit spans residues 74–155 (FDLVPVPPNL…EVQGFESSTF (82 aa)). Tyr84 carries the post-translational modification Phosphotyrosine. Positions 90, 91, 122, 134, 139, and 141 each coordinate Ca(2+). The actin-actin interfilament contact point stretch occupies residues 121–124 (DESG). 160–167 (KSGLKYKK) is a binding site for a 1,2-diacyl-sn-glycero-3-phospho-(1D-myo-inositol-4,5-bisphosphate). Val170 is a binding site for Ca(2+). 186–194 (RLFQVKGRR) is an a 1,2-diacyl-sn-glycero-3-phospho-(1D-myo-inositol-4,5-bisphosphate) binding site. The stretch at 196-268 (VRATEVPVSW…SEEGGEPEAM (73 aa)) is one Gelsolin-like 2 repeat. Ca(2+) is bound by residues Gly211 and Asp212. Cys213 and Cys226 are joined by a disulfide. Glu234 contributes to the Ca(2+) binding site. Residues 244 to 269 (GIRDNERSGRAQVHVSEEGGEPEAML) are disordered. The Ca(2+) site is built by Asp284, Glu327, Asp328, and Glu352. Residues 315-387 (DENPFAQGAL…LPEGGETPLF (73 aa)) form a Gelsolin-like 3 repeat. A phosphotyrosine mark is found at Tyr407 and Tyr463. Residues 432–780 (AAQHGMDDDG…LDRALAELAA (349 aa)) form an actin-binding, Ca-sensitive region. Residues 453–534 (SNKVPVDPAT…VQGKEPAHLM (82 aa)) form a Gelsolin-like 4 repeat. 7 residues coordinate Ca(2+): Gly469, Asp470, Glu500, Asp512, Gly517, Pro519, and Thr549. One copy of the Gelsolin-like 5 repeat lies at 575–640 (RAVEVMPKSG…EEGSEPDAFW (66 aa)). Lys582 is modified (N6-acetyllysine). Residues Asn589 and Asp590 each coordinate Ca(2+). Residue Tyr601 is modified to Phosphotyrosine. Residue Glu612 participates in Ca(2+) binding. Tyr649 is modified (phosphotyrosine). Residues 679-754 (IEEVPGELMQ…VRQGFEPPSF (76 aa)) form a Gelsolin-like 6 repeat. Ca(2+) is bound by residues Asp694, Asp695, and Glu717. Thr740 is subject to Phosphothreonine.

This sequence belongs to the villin/gelsolin family. Binds to actin and to fibronectin. Identified in a complex composed of ACTA1, COBL, GSN and TMSB4X. Interacts with the inactive form of EIF2AK2/PKR. Interacts with FLII. In terms of processing, phosphorylated on tyrosine residues in vitro.

It is found in the cytoplasm. The protein localises to the cytoskeleton. The protein resides in the secreted. Functionally, calcium-regulated, actin-modulating protein that binds to the plus (or barbed) ends of actin monomers or filaments, preventing monomer exchange (end-blocking or capping). It can promote the assembly of monomers into filaments (nucleation) as well as sever filaments already formed. Plays a role in ciliogenesis. The protein is Gelsolin (Gsn) of Mus musculus (Mouse).